The following is a 1075-amino-acid chain: Disheveled-associated activator of morphogenesis 2 (1075 aa).

The region spanning V40–D416 is the GBD/FH3 domain. The stretch at N437–G517 forms a coiled coil. Disordered regions lie at residues G517–P611, K1006–E1025, and S1048–Y1075. Pro residues predominate over residues P523–G532. Residues P533 to L544 are compositionally biased toward low complexity. The span at P550–P581 shows a compositional bias: pro residues. In terms of domain architecture, FH2 spans K605–Y1075. The DAD domain occupies E1025–Y1075. The span at T1064–Y1075 shows a compositional bias: basic and acidic residues.

It belongs to the formin homology family. In terms of tissue distribution, expressed in progenitor populations of the embryonic spinal cord (at protein level).

In terms of biological role, key regulator of the Wnt signaling pathway, which is required for various processes during development, such as dorsal patterning, determination of left/right symmetry or myelination in the central nervous system. Acts downstream of Wnt ligands and upstream of beta-catenin (CTNNB1). Required for canonical Wnt signaling pathway during patterning in the dorsal spinal cord by promoting the aggregation of Disheveled (Dvl) complexes, thereby clustering and formation of Wnt receptor signalosomes and potentiating Wnt activity. During dorsal patterning of the spinal cord, inhibits oligodendrocytes differentiation via interaction with PIP5K1A. Also regulates non-canonical Wnt signaling pathway. Acts downstream of PITX2 in the developing gut and is required for left/right asymmetry within dorsal mesentery: affects mesenchymal condensation by lengthening cadherin-based junctions through WNT5A and non-canonical Wnt signaling, inducing polarized condensation in the left dorsal mesentery necessary to initiate gut rotation. Together with DAAM1, required for myocardial maturation and sarcomere assembly. The sequence is that of Disheveled-associated activator of morphogenesis 2 from Gallus gallus (Chicken).